A 360-amino-acid polypeptide reads, in one-letter code: Histidinol-phosphate aminotransferase (360 aa).

Position 223 is an N6-(pyridoxal phosphate)lysine (lysine 223).

It belongs to the class-II pyridoxal-phosphate-dependent aminotransferase family. Histidinol-phosphate aminotransferase subfamily. As to quaternary structure, homodimer. Pyridoxal 5'-phosphate is required as a cofactor.

The catalysed reaction is L-histidinol phosphate + 2-oxoglutarate = 3-(imidazol-4-yl)-2-oxopropyl phosphate + L-glutamate. The protein operates within amino-acid biosynthesis; L-histidine biosynthesis; L-histidine from 5-phospho-alpha-D-ribose 1-diphosphate: step 7/9. The chain is Histidinol-phosphate aminotransferase from Bacillus subtilis subsp. natto.